The following is a 122-amino-acid chain: Large ribosomal subunit protein uL14 (122 aa).

This sequence belongs to the universal ribosomal protein uL14 family. Part of the 50S ribosomal subunit. Forms a cluster with proteins L3 and L19. In the 70S ribosome, L14 and L19 interact and together make contacts with the 16S rRNA in bridges B5 and B8.

Functionally, binds to 23S rRNA. Forms part of two intersubunit bridges in the 70S ribosome. The protein is Large ribosomal subunit protein uL14 of Hydrogenovibrio crunogenus (strain DSM 25203 / XCL-2) (Thiomicrospira crunogena).